The following is a 294-amino-acid chain: Small ribosomal subunit protein uS2 (294 aa).

It belongs to the universal ribosomal protein uS2 family.

The sequence is that of Small ribosomal subunit protein uS2 (rpsB) from Mycoplasma pneumoniae (strain ATCC 29342 / M129 / Subtype 1) (Mycoplasmoides pneumoniae).